Here is a 103-residue protein sequence, read N- to C-terminus: N(4)-acetylcytidine amidohydrolase (103 aa).

The region spanning 6 to 101 (ITFFQRFQDD…QTQFYVIEFK (96 aa)) is the ASCH domain. The active-site Proton acceptor is Lys-21. Thr-24 acts as the Nucleophile in catalysis. The active-site Proton donor is the Glu-74.

The protein belongs to the N(4)-acetylcytidine amidohydrolase family.

It carries out the reaction N(4)-acetylcytidine + H2O = cytidine + acetate + H(+). The enzyme catalyses N(4)-acetyl-2'-deoxycytidine + H2O = 2'-deoxycytidine + acetate + H(+). The catalysed reaction is N(4)-acetylcytosine + H2O = cytosine + acetate + H(+). Functionally, catalyzes the hydrolysis of N(4)-acetylcytidine (ac4C). The protein is N(4)-acetylcytidine amidohydrolase (yqfB) of Escherichia coli O8 (strain IAI1).